Here is a 351-residue protein sequence, read N- to C-terminus: Anthranilate phosphoribosyltransferase (351 aa).

5-phospho-alpha-D-ribose 1-diphosphate contacts are provided by residues Gly-80, 83-84 (GD), Thr-88, 90-93 (NIST), 108-116 (KHGNRSITS), and Ser-120. Gly-80 provides a ligand contact to anthranilate. Residue Ser-92 participates in Mg(2+) binding. Position 111 (Asn-111) interacts with anthranilate. Position 166 (Arg-166) interacts with anthranilate. Positions 229 and 230 each coordinate Mg(2+).

This sequence belongs to the anthranilate phosphoribosyltransferase family. In terms of assembly, homodimer. Mg(2+) is required as a cofactor.

The enzyme catalyses N-(5-phospho-beta-D-ribosyl)anthranilate + diphosphate = 5-phospho-alpha-D-ribose 1-diphosphate + anthranilate. It participates in amino-acid biosynthesis; L-tryptophan biosynthesis; L-tryptophan from chorismate: step 2/5. Catalyzes the transfer of the phosphoribosyl group of 5-phosphorylribose-1-pyrophosphate (PRPP) to anthranilate to yield N-(5'-phosphoribosyl)-anthranilate (PRA). This Chlorobaculum parvum (strain DSM 263 / NCIMB 8327) (Chlorobium vibrioforme subsp. thiosulfatophilum) protein is Anthranilate phosphoribosyltransferase.